Consider the following 219-residue polypeptide: Large ribosomal subunit protein uL4 (219 aa).

The tract at residues 45 to 103 (ARRQGTHATKTRGQVRGGGRKPYRQKGTGRARQGSIRAPQFTGGGTVHGPQPRDYDQRT) is disordered. Positions 62–73 (GGRKPYRQKGTG) are enriched in basic residues.

The protein belongs to the universal ribosomal protein uL4 family. In terms of assembly, part of the 50S ribosomal subunit.

Functionally, one of the primary rRNA binding proteins, this protein initially binds near the 5'-end of the 23S rRNA. It is important during the early stages of 50S assembly. It makes multiple contacts with different domains of the 23S rRNA in the assembled 50S subunit and ribosome. In terms of biological role, forms part of the polypeptide exit tunnel. The chain is Large ribosomal subunit protein uL4 from Corynebacterium kroppenstedtii (strain DSM 44385 / JCM 11950 / CIP 105744 / CCUG 35717).